The following is a 94-amino-acid chain: Large ribosomal subunit protein eL42 (94 aa).

Residues Cys11, Cys14, Cys71, and Cys74 each coordinate Zn(2+). A C4-type zinc finger spans residues 11-74; it reads CPFCKRHTIH…LDLRFRCTVC (64 aa).

The protein belongs to the eukaryotic ribosomal protein eL42 family. As to quaternary structure, part of the 50S ribosomal subunit. It depends on Zn(2+) as a cofactor.

Binds to the 23S rRNA. This chain is Large ribosomal subunit protein eL42, found in Thermococcus kodakarensis (strain ATCC BAA-918 / JCM 12380 / KOD1) (Pyrococcus kodakaraensis (strain KOD1)).